Consider the following 220-residue polypeptide: UPF0758 protein ASA_4229 (220 aa).

The MPN domain maps to 95 to 220 (EQLQRGDALT…TVSFAERGWL (126 aa)). H169, H171, and D182 together coordinate Zn(2+). Positions 169-182 (HNHPSGVAEPSRAD) match the JAMM motif motif.

Belongs to the UPF0758 family.

The polypeptide is UPF0758 protein ASA_4229 (Aeromonas salmonicida (strain A449)).